A 398-amino-acid chain; its full sequence is Substance-K receptor (398 aa).

Residues 1–32 lie on the Extracellular side of the membrane; it reads MGTCDIVTEANISSGPESNTTGITAFSMPSWQ. Asn-11 and Asn-19 each carry an N-linked (GlcNAc...) asparagine glycan. A helical transmembrane segment spans residues 33-56; it reads LALWATAYLALVLVAVTGNAIVIW. Residues 57-69 lie on the Cytoplasmic side of the membrane; sequence IILAHRRMRTVTN. The chain crosses the membrane as a helical span at residues 70–90; sequence YFIVNLALADLCMAAFNAAFN. Residues 91-107 lie on the Extracellular side of the membrane; it reads FVYASHNIWYFGRAFCY. An intrachain disulfide couples Cys-106 to Cys-181. The chain crosses the membrane as a helical span at residues 108-129; the sequence is FQNLFPITAMFVSIYSMTAIAA. Residues 130 to 149 are Cytoplasmic-facing; the sequence is DRYMAIVHPFQPRLSAPSTK. The helical transmembrane segment at 150–170 threads the bilayer; the sequence is AVIAGIWLVALALASPQCFYS. Topologically, residues 171–196 are extracellular; the sequence is TVTMDQGATKCVVAWPEDSGGKTLLL. The helical transmembrane segment at 197–218 threads the bilayer; it reads YHLVVIALIYFLPLAVMFVAYS. Over 219–251 the chain is Cytoplasmic; the sequence is VIGLTLWRRAVPGHQAHGANLRHLQAMKKFVKT. Residues 252–272 traverse the membrane as a helical segment; the sequence is MVLVVLTFAICWLPYHLYFIL. Residues 273–290 are Extracellular-facing; it reads GSFQEDIYCHKFIQQVYL. A helical transmembrane segment spans residues 291–310; that stretch reads ALFWLAMSSTMYNPIIYCCL. At 311-398 the chain is on the cytoplasmic side; sequence NHRFRSGFRL…LAPTKTHVEI (88 aa). Cys-324 carries the S-palmitoyl cysteine lipid modification.

The protein belongs to the G-protein coupled receptor 1 family.

Its subcellular location is the cell membrane. In terms of biological role, this is a receptor for the tachykinin neuropeptide substance K (neurokinin A). It is associated with G proteins that activate a phosphatidylinositol-calcium second messenger system. The rank order of affinity of this receptor to tachykinins is: substance K &gt; neuromedin-K &gt; substance P. This chain is Substance-K receptor (TACR2), found in Homo sapiens (Human).